The chain runs to 258 residues: Tryptophan synthase alpha chain (258 aa).

Residues E47 and D58 each act as proton acceptor in the active site.

Belongs to the TrpA family. In terms of assembly, tetramer of two alpha and two beta chains.

It catalyses the reaction (1S,2R)-1-C-(indol-3-yl)glycerol 3-phosphate + L-serine = D-glyceraldehyde 3-phosphate + L-tryptophan + H2O. The protein operates within amino-acid biosynthesis; L-tryptophan biosynthesis; L-tryptophan from chorismate: step 5/5. The alpha subunit is responsible for the aldol cleavage of indoleglycerol phosphate to indole and glyceraldehyde 3-phosphate. The sequence is that of Tryptophan synthase alpha chain from Bacillus thuringiensis (strain Al Hakam).